Reading from the N-terminus, the 337-residue chain is Probable E3 ubiquitin-protein ligase LUL1 (337 aa).

A lipid anchor (N-myristoyl glycine) is attached at Gly-2. Positions 139–255 are DAR2 domain; the sequence is FTFDASMPGR…GEIKIEVVKQ (117 aa). The RING-type; atypical zinc finger occupies 285-324; it reads CVVCLSEPRDTTVLPCRHMCMCSGCAKALRFQTNLCPVCR.

It belongs to the RING-type zinc finger family. LOG2 subfamily. Post-translationally, myristoylated (in vitro).

The catalysed reaction is S-ubiquitinyl-[E2 ubiquitin-conjugating enzyme]-L-cysteine + [acceptor protein]-L-lysine = [E2 ubiquitin-conjugating enzyme]-L-cysteine + N(6)-ubiquitinyl-[acceptor protein]-L-lysine.. The protein operates within protein modification; protein ubiquitination. In terms of biological role, acts as an E3 ubiquitin-protein ligase, or as part of E3 complex, which accepts ubiquitin from specific E2 ubiquitin-conjugating enzymes and then transfers it to substrates (in vitro). This chain is Probable E3 ubiquitin-protein ligase LUL1 (LUL1), found in Arabidopsis thaliana (Mouse-ear cress).